The sequence spans 110 residues: MSMTDLLHAEDIKKAVGAFTAVDSFDHKKFFQMVGLKKKSPEDVKKVFHILDKDKSGFIEEEELGFILKGFSPDARDLSVKETKTLLAAGDKDGDGKIGADEFSTLVAES.

An N-acetylserine modification is found at Ser-2. 2 positions are modified to phosphoserine: Ser-2 and Ser-24. EF-hand domains lie at 39-74 (KSPEDVKKVFHILDKDKSGFIEEEELGFILKGFSPD) and 78-110 (LSVKETKTLLAAGDKDGDGKIGADEFSTLVAES). Ca(2+) contacts are provided by Asp-52, Asp-54, Ser-56, Phe-58, Glu-60, Glu-63, Asp-91, Asp-93, Asp-95, Lys-97, and Glu-102.

The protein belongs to the parvalbumin family.

Its function is as follows. In muscle, parvalbumin is thought to be involved in relaxation after contraction. It binds two calcium ions. In Bos taurus (Bovine), this protein is Parvalbumin alpha (PVALB).